We begin with the raw amino-acid sequence, 472 residues long: Mitochondrial substrate carrier family protein C (472 aa).

Residues 1-189 (MVLNENDKEF…ASSLRNTITY (189 aa)) lie on the Mitochondrial intermembrane side of the membrane. 4 consecutive EF-hand domains span residues 6-41 (NDKE…LRIP), 42-70 (SSEK…FEDF), 73-108 (ENIK…LNIP), and 110-145 (YSEQ…LPNS). Ca(2+) contacts are provided by D19, D21, N23, K25, E30, D55, D57, D59, S61, E66, D86, N88, S90, T92, E97, D123, N125, D127, Q129, and E134. Solcar repeat units follow at residues 184–268 (RNTI…VKKL), 276–362 (LTSA…LKHK), and 375–461 (GQLL…FKKA). A helical membrane pass occupies residues 190 to 207 (MLAGSVAGFASRTSTAPL). Residues 208–242 (ERVKIMCQLNHGKPISLISAFKACYKDGGIKGFFR) lie on the Mitochondrial matrix side of the membrane. Residues 243 to 263 (GNLANIIKVSPESAVKFGTYE) traverse the membrane as a helical segment. Residues 264-281 (YVKKLFAENDCELTSAQR) are Mitochondrial intermembrane-facing. Residues 282–302 (FISGSVAGVVSHTTLFPLEVV) form a helical membrane-spanning segment. At 303–330 (RLRLSAEIAGTYNGIFDCFKKIAISEKS) the chain is on the mitochondrial matrix side. A helical membrane pass occupies residues 331-351 (IRPFYRGLGASITATIPHSGV). Topologically, residues 352 to 377 (NMMVYEFLKHKVIKMTGNEFPTAGQL) are mitochondrial intermembrane. The chain crosses the membrane as a helical span at residues 378–398 (LVCASTSSVCGQLVGYPFHVV). Topologically, residues 399–441 (KSRLITQGSSVNQEKYTGLFDGLTKIIKKEGPIGLYKGIVPSF) are mitochondrial matrix. The helical transmembrane segment at 442-462 (MKSIPSHSITFIVYEGFKKAF) threads the bilayer. Over 463 to 472 (DVNLKEKKHH) the chain is Mitochondrial intermembrane.

Belongs to the mitochondrial carrier (TC 2.A.29) family.

Its subcellular location is the mitochondrion inner membrane. Its function is as follows. Calcium-dependent mitochondrial solute carrier. Mitochondrial solute carriers shuttle metabolites, nucleotides, and cofactors through the mitochondrial inner membrane. The protein is Mitochondrial substrate carrier family protein C (mcfC) of Dictyostelium discoideum (Social amoeba).